The following is a 197-amino-acid chain: Large ribosomal subunit protein bL25 (197 aa).

Belongs to the bacterial ribosomal protein bL25 family. CTC subfamily. As to quaternary structure, part of the 50S ribosomal subunit; part of the 5S rRNA/L5/L18/L25 subcomplex. Contacts the 5S rRNA. Binds to the 5S rRNA independently of L5 and L18.

Functionally, this is one of the proteins that binds to the 5S RNA in the ribosome where it forms part of the central protuberance. This is Large ribosomal subunit protein bL25 from Citrifermentans bemidjiense (strain ATCC BAA-1014 / DSM 16622 / JCM 12645 / Bem) (Geobacter bemidjiensis).